The primary structure comprises 408 residues: Myb/SANT-like DNA-binding domain-containing protein 4 (408 aa).

The 74-residue stretch at 4–77 (LKRKRKSNFS…EVKRRYLDWR (74 aa)) folds into the Myb-like domain. A coiled-coil region spans residues 236–367 (HLLVTLEKQK…IEKERLQDAL (132 aa)).

The chain is Myb/SANT-like DNA-binding domain-containing protein 4 (msantd4) from Xenopus tropicalis (Western clawed frog).